Here is a 160-residue protein sequence, read N- to C-terminus: Secreted RxLR effector protein RXLR-C11 (160 aa).

The N-terminal stretch at 1-19 (MHFSLVLLVFAAIVIPICA) is a signal peptide. A RxLR-dEER motif is present at residues 58–75 (RLLRMNDKAVISDHEEER).

This sequence belongs to the RxLR effector family.

The protein resides in the secreted. The protein localises to the host cell membrane. It localises to the host nucleus. Functionally, secreted effector that suppresses pattern-triggered immunity (PTI) in plant host. The sequence is that of Secreted RxLR effector protein RXLR-C11 from Plasmopara halstedii (Downy mildew of sunflower).